A 264-amino-acid polypeptide reads, in one-letter code: 3-methyl-2-oxobutanoate hydroxymethyltransferase (264 aa).

Residues Asp-45 and Asp-84 each coordinate Mg(2+). 3-methyl-2-oxobutanoate-binding positions include Asp-45–Ser-46, Asp-84, and Lys-112. Glu-114 lines the Mg(2+) pocket. Catalysis depends on Glu-181, which acts as the Proton acceptor.

Belongs to the PanB family. Homodecamer; pentamer of dimers. Mg(2+) is required as a cofactor.

The protein localises to the cytoplasm. It carries out the reaction 3-methyl-2-oxobutanoate + (6R)-5,10-methylene-5,6,7,8-tetrahydrofolate + H2O = 2-dehydropantoate + (6S)-5,6,7,8-tetrahydrofolate. It participates in cofactor biosynthesis; (R)-pantothenate biosynthesis; (R)-pantoate from 3-methyl-2-oxobutanoate: step 1/2. Its function is as follows. Catalyzes the reversible reaction in which hydroxymethyl group from 5,10-methylenetetrahydrofolate is transferred onto alpha-ketoisovalerate to form ketopantoate. The polypeptide is 3-methyl-2-oxobutanoate hydroxymethyltransferase (Shewanella oneidensis (strain ATCC 700550 / JCM 31522 / CIP 106686 / LMG 19005 / NCIMB 14063 / MR-1)).